The following is a 215-amino-acid chain: Probable phosphoglycerate mutase GpmB (215 aa).

Residues 8–15 (RHGETEWN), 21–22 (QG), R58, 82–85 (ELDM), and 151–152 (GI) contribute to the substrate site. The active-site Tele-phosphohistidine intermediate is H9. The active-site Proton donor/acceptor is E82.

This sequence belongs to the phosphoglycerate mutase family. GpmB subfamily.

It catalyses the reaction (2R)-2-phosphoglycerate = (2R)-3-phosphoglycerate. It participates in carbohydrate degradation; glycolysis; pyruvate from D-glyceraldehyde 3-phosphate: step 3/5. This is Probable phosphoglycerate mutase GpmB from Proteus mirabilis (strain HI4320).